The sequence spans 976 residues: Vacuolar membrane protease (976 aa).

Residues 1–15 (MKLKSVFRSVLKYRK) are Cytoplasmic-facing. The chain crosses the membrane as a helical span at residues 16–36 (TNLSLLLLITYSIITLLYIFD). The Vacuolar segment spans residues 37 to 359 (HERYKLNLPK…KFFVISAKTL (323 aa)). Asn96 and Asn121 each carry an N-linked (GlcNAc...) asparagine glycan. His156 and Asp168 together coordinate Zn(2+). The N-linked (GlcNAc...) asparagine glycan is linked to Asn189. Catalysis depends on Glu200, which acts as the Proton acceptor. A Zn(2+)-binding site is contributed by Glu201. Asn212 and Asn217 each carry an N-linked (GlcNAc...) asparagine glycan. The Zn(2+) site is built by Glu226 and His300. A helical transmembrane segment spans residues 360–380 (FYWNCIFLLVSPVVAIGLYLI). The Cytoplasmic portion of the chain corresponds to 381-392 (SRDRMTWKSHSW). A helical membrane pass occupies residues 393-412 (LSWTRFPLSLAAGIIVQKLF). The Vacuolar segment spans residues 413–428 (SNDIIRSNPLTFSRNY). A helical transmembrane segment spans residues 429–449 (FWPISAFFTQVIFTSYVLINC). Topologically, residues 450–461 (SNFFFPCADMKS) are cytoplasmic. The helical transmembrane segment at 462 to 482 (LSIIELFIILWTILLFTSKLL) threads the bilayer. The Vacuolar segment spans residues 483–496 (YSSDYRYTGLYPLS). Residues 497–517 (IFFLLSTIAAILRLLALALGM) form a helical membrane-spanning segment. At 518-627 (RTRKRLGREC…NSLKLEYTDY (110 aa)) the chain is on the cytoplasmic side. The segment at 528 to 610 (RDHHSNYSSH…PLLKGSNSME (83 aa)) is disordered. Polar residues predominate over residues 549–558 (NLEQPQDQFT). The segment covering 559–570 (SSQDDQASIQDD) has biased composition (low complexity). Over residues 582–601 (NVDEDHGMDSSSQQHDERVP) the composition is skewed to basic and acidic residues. Residues 628 to 648 (AWIIQFLLIVPIPSFILFNSV) form a helical membrane-spanning segment. Residues 649–668 (DVIMDALNHTVQEGSKATFD) are Vacuolar-facing. Residue Asn656 is glycosylated (N-linked (GlcNAc...) asparagine). The chain crosses the membrane as a helical span at residues 669–689 (VLRFGMVGSILIALPILPFFY). Residues 690 to 692 (KVN) lie on the Cytoplasmic side of the membrane. Residues 693 to 713 (YITISLTALLFLISASKTLLV) form a helical membrane-spanning segment. The Vacuolar segment spans residues 714–976 (HPFTNSNPLK…LVIVKDAIIL (263 aa)). N-linked (GlcNAc...) asparagine glycosylation is found at Asn768, Asn796, Asn811, Asn866, and Asn937.

Belongs to the peptidase M28 family. Requires Zn(2+) as cofactor.

It localises to the vacuole membrane. May be involved in vacuolar sorting and osmoregulation. This Saccharomyces cerevisiae (strain JAY291) (Baker's yeast) protein is Vacuolar membrane protease.